The chain runs to 96 residues: Glutamyl-tRNA(Gln) amidotransferase subunit C (96 aa).

This sequence belongs to the GatC family. As to quaternary structure, heterotrimer of A, B and C subunits.

It carries out the reaction L-glutamyl-tRNA(Gln) + L-glutamine + ATP + H2O = L-glutaminyl-tRNA(Gln) + L-glutamate + ADP + phosphate + H(+). The enzyme catalyses L-aspartyl-tRNA(Asn) + L-glutamine + ATP + H2O = L-asparaginyl-tRNA(Asn) + L-glutamate + ADP + phosphate + 2 H(+). Functionally, allows the formation of correctly charged Asn-tRNA(Asn) or Gln-tRNA(Gln) through the transamidation of misacylated Asp-tRNA(Asn) or Glu-tRNA(Gln) in organisms which lack either or both of asparaginyl-tRNA or glutaminyl-tRNA synthetases. The reaction takes place in the presence of glutamine and ATP through an activated phospho-Asp-tRNA(Asn) or phospho-Glu-tRNA(Gln). The polypeptide is Glutamyl-tRNA(Gln) amidotransferase subunit C (Pseudomonas aeruginosa (strain ATCC 15692 / DSM 22644 / CIP 104116 / JCM 14847 / LMG 12228 / 1C / PRS 101 / PAO1)).